The chain runs to 158 residues: MATKTNHIAVVAENRKARHDYDIEETIEAGIVLSGSEIKSVRAGRVNLRGSFARVIDDEVFLYDAHIAPYEQSGKYFNHDPLRPRKLLLHRREINRLNGLVRMKGMTLVPLKIYLKGRRAKVELGIARGKKIYDKREDIARRDAERDIERALKRRIRE.

Belongs to the SmpB family.

It is found in the cytoplasm. Its function is as follows. Required for rescue of stalled ribosomes mediated by trans-translation. Binds to transfer-messenger RNA (tmRNA), required for stable association of tmRNA with ribosomes. tmRNA and SmpB together mimic tRNA shape, replacing the anticodon stem-loop with SmpB. tmRNA is encoded by the ssrA gene; the 2 termini fold to resemble tRNA(Ala) and it encodes a 'tag peptide', a short internal open reading frame. During trans-translation Ala-aminoacylated tmRNA acts like a tRNA, entering the A-site of stalled ribosomes, displacing the stalled mRNA. The ribosome then switches to translate the ORF on the tmRNA; the nascent peptide is terminated with the 'tag peptide' encoded by the tmRNA and targeted for degradation. The ribosome is freed to recommence translation, which seems to be the essential function of trans-translation. This Chloroflexus aggregans (strain MD-66 / DSM 9485) protein is SsrA-binding protein.